Consider the following 716-residue polypeptide: Probable calcium-binding mitochondrial carrier K02F3.2 (716 aa).

The N-terminal domain stretch occupies residues Met-1–Pro-345. EF-hand domains are found at residues Tyr-93 to Phe-121, Ser-127 to Leu-162, Gln-165 to Leu-195, and Phe-198 to His-233. Ca(2+)-binding residues include Asp-106, Thr-108, Asp-110, Glu-117, Asp-140, Asn-142, Ser-144, Thr-146, and Glu-151. Asp-211, Asn-213, Asn-215, Thr-217, and Asp-222 together coordinate Ca(2+). The tract at residues Glu-346–Ala-362 is linker loop domain. The carrier domain stretch occupies residues Gly-372–Ser-664. Solcar repeat units lie at residues Leu-376 to Lys-468, Ile-475 to Ala-560, and Asn-568 to Leu-656. Helical transmembrane passes span Phe-382 to Ile-399, Gly-443 to Asn-462, Gly-485 to Leu-498, Gly-535 to Tyr-554, Phe-574 to Ala-591, and Gly-631 to Tyr-650. Residues Arg-665–Lys-716 form a C-terminal domain region.

It belongs to the mitochondrial carrier (TC 2.A.29) family. As to quaternary structure, homodimer (via N-terminus).

It is found in the mitochondrion inner membrane. Its function is as follows. Mitochondrial and calcium-binding carrier that catalyzes the calcium-dependent exchange of cytoplasmic glutamate with mitochondrial aspartate across the mitochondrial inner membrane. This is Probable calcium-binding mitochondrial carrier K02F3.2 from Caenorhabditis elegans.